Consider the following 389-residue polypeptide: S-adenosylmethionine synthase (389 aa).

An ATP-binding site is contributed by His-19. Asp-21 is a Mg(2+) binding site. Glu-47 is a K(+) binding site. Positions 60 and 103 each coordinate L-methionine. A flexible loop region spans residues 103–113 (QSVDIAQGVDR). Residues 168–170 (DGK), 234–235 (RF), Asp-243, 249–250 (RK), Ala-266, and Lys-270 each bind ATP. Asp-243 serves as a coordination point for L-methionine. Residue Lys-274 participates in L-methionine binding.

Belongs to the AdoMet synthase family. Homotetramer; dimer of dimers. The cofactor is Mg(2+). Requires K(+) as cofactor.

Its subcellular location is the cytoplasm. It catalyses the reaction L-methionine + ATP + H2O = S-adenosyl-L-methionine + phosphate + diphosphate. It participates in amino-acid biosynthesis; S-adenosyl-L-methionine biosynthesis; S-adenosyl-L-methionine from L-methionine: step 1/1. Functionally, catalyzes the formation of S-adenosylmethionine (AdoMet) from methionine and ATP. The overall synthetic reaction is composed of two sequential steps, AdoMet formation and the subsequent tripolyphosphate hydrolysis which occurs prior to release of AdoMet from the enzyme. The polypeptide is S-adenosylmethionine synthase (Maridesulfovibrio salexigens (strain ATCC 14822 / DSM 2638 / NCIMB 8403 / VKM B-1763) (Desulfovibrio salexigens)).